Consider the following 215-residue polypeptide: Nucleoside triphosphate pyrophosphatase (215 aa).

Aspartate 77 serves as the catalytic Proton acceptor.

It belongs to the Maf family. The cofactor is a divalent metal cation.

The protein localises to the cytoplasm. The enzyme catalyses a ribonucleoside 5'-triphosphate + H2O = a ribonucleoside 5'-phosphate + diphosphate + H(+). The catalysed reaction is a 2'-deoxyribonucleoside 5'-triphosphate + H2O = a 2'-deoxyribonucleoside 5'-phosphate + diphosphate + H(+). Nucleoside triphosphate pyrophosphatase. May have a dual role in cell division arrest and in preventing the incorporation of modified nucleotides into cellular nucleic acids. The chain is Nucleoside triphosphate pyrophosphatase from Rickettsia peacockii (strain Rustic).